The following is a 262-amino-acid chain: Bacteriorhodopsin (262 aa).

Positions 1–13 (MLELLPTAVEGVS) are excised as a propeptide. At Q14 the chain carries Pyrrolidone carboxylic acid. Residues 14–22 (QAQITGRPE) lie on the Extracellular side of the membrane. A helical membrane pass occupies residues 23–42 (WIWLALGTALMGLGTLYFLV). The Cytoplasmic segment spans residues 43 to 56 (KGMGVSDPDAKKFY). The chain crosses the membrane as a helical span at residues 57-75 (AITTLVPAIAFTMYLSMLL). Over 76-92 (GYGLTMVPFGGEQNPIY) the chain is Extracellular. The chain crosses the membrane as a helical span at residues 93–109 (WARYADWLFTTPLLLLD). Residues 110–120 (LALLVDADQGT) lie on the Cytoplasmic side of the membrane. A helical membrane pass occupies residues 121 to 140 (ILALVGADGIMIGTGLVGAL). The Extracellular portion of the chain corresponds to 141-147 (TKVYSYR). Residues 148 to 167 (FVWWAISTAAMLYILYVLFF) form a helical membrane-spanning segment. At 168–185 (GFTSKAESMRPEVASTFK) the chain is on the cytoplasmic side. Residues 186 to 204 (VLRNVTVVLWSAYPVVWLI) form a helical membrane-spanning segment. The Extracellular segment spans residues 205–216 (GSEGAGIVPLNI). Residues 217–236 (ETLLFMVLDVSAKVGFGLIL) form a helical membrane-spanning segment. K229 is subject to N6-(retinylidene)lysine. Residues 237–262 (LRSRAIFGEAEAPEPSAGDGAAATSD) are Cytoplasmic-facing.

As to quaternary structure, homotrimer. Post-translationally, the covalent binding of retinal to the apoprotein, bacterioopsin, generates bacteriorhodopsin.

Its subcellular location is the cell membrane. Functionally, light-driven proton pump. The sequence is that of Bacteriorhodopsin (bop) from Halobacterium salinarum (strain ATCC 700922 / JCM 11081 / NRC-1) (Halobacterium halobium).